The following is a 1392-amino-acid chain: DNA-directed RNA polymerase subunit beta'' (1392 aa).

4 residues coordinate Zn(2+): Cys224, Cys295, Cys302, and Cys305.

Belongs to the RNA polymerase beta' chain family. RpoC2 subfamily. In terms of assembly, in plastids the minimal PEP RNA polymerase catalytic core is composed of four subunits: alpha, beta, beta', and beta''. When a (nuclear-encoded) sigma factor is associated with the core the holoenzyme is formed, which can initiate transcription. It depends on Zn(2+) as a cofactor.

Its subcellular location is the plastid. It localises to the chloroplast. The catalysed reaction is RNA(n) + a ribonucleoside 5'-triphosphate = RNA(n+1) + diphosphate. Its function is as follows. DNA-dependent RNA polymerase catalyzes the transcription of DNA into RNA using the four ribonucleoside triphosphates as substrates. The chain is DNA-directed RNA polymerase subunit beta'' from Nicotiana sylvestris (Wood tobacco).